A 295-amino-acid polypeptide reads, in one-letter code: Cytidine deaminase (295 aa).

2 consecutive CMP/dCMP-type deaminase domains span residues 48–168 (TDNQ…FGPS) and 187–295 (EDDD…YLSL). 89–91 (NME) contributes to the substrate binding site. Zn(2+) is bound at residue His102. The active-site Proton donor is Glu104. The Zn(2+) site is built by Cys129 and Cys132.

Belongs to the cytidine and deoxycytidylate deaminase family. Homodimer. Zn(2+) is required as a cofactor.

The enzyme catalyses cytidine + H2O + H(+) = uridine + NH4(+). It carries out the reaction 2'-deoxycytidine + H2O + H(+) = 2'-deoxyuridine + NH4(+). Its function is as follows. This enzyme scavenges exogenous and endogenous cytidine and 2'-deoxycytidine for UMP synthesis. The polypeptide is Cytidine deaminase (Vibrio vulnificus (strain CMCP6)).